The primary structure comprises 758 residues: Probable C-mannosyltransferase DPY19L2 (758 aa).

The interval 1 to 58 (MRKQGVSSKRLQSSGRSQSKGRRGASLAREPEVEEEMEKSALGGGKLPRGSWRSSPGR) is disordered. The Nuclear portion of the chain corresponds to 1-107 (MRKQGVSSKR…ELQARRFSSR (107 aa)). Residues 7–18 (SSKRLQSSGRSQ) show a composition bias toward low complexity. The helical transmembrane segment at 108–128 (TTLGIAVFVAILHWLHLVTLF) threads the bilayer. Residues 129-194 (ENDRHFSHLS…INAIKRFHLY (66 aa)) are Perinuclear space-facing. Residues 195-215 (PEVIIASWYCTFMGIMNLFGL) form a helical membrane-spanning segment. At 216–241 (ETKTCWNVTRIEPLNEVQSCEGLGDP) the chain is on the nuclear side. 2 helical membrane passes run 242–262 (ACFYVGVIFILNGLMMGLFFM) and 263–283 (YGAYLSGTQLGGLITVLCFFF). Topologically, residues 284–296 (NHGEATRVMWTPP) are nuclear. The helical transmembrane segment at 297-317 (LRESFSYPFLVLQMCILTLIL) threads the bilayer. The Perinuclear space portion of the chain corresponds to 318–343 (RTSSNDRRPFIALCLSNVAFMLPWQF). The helical transmembrane segment at 344 to 364 (AQFILFTQIASLFPMYVVGYI) threads the bilayer. The Nuclear portion of the chain corresponds to 365–371 (EPSKFQK). A helical transmembrane segment spans residues 372 to 392 (IIYMNMISVTLSFILMFGNSM). Residues 393–422 (YLSSYYSSSLLMTWAIILKRNEIQKLGVSK) are Perinuclear space-facing. A helical membrane pass occupies residues 423–443 (LNFWLIQGSAWWCGTIILKFL). Residues 444–488 (TSKILGVSDHIRLSDLIAARILRYTDFDTLIYTCAPEFDFMEKAT) lie on the Nuclear side of the membrane. Residues 489–509 (PLRYTKTLLLPVVMVITCFIF) traverse the membrane as a helical segment. Residues 510–533 (KKTVRDISYVLATNIYLRKQLLEH) lie on the Perinuclear space side of the membrane. Residues 534-554 (SELAFHTLQLLVFTALAILIM) form a helical membrane-spanning segment. Topologically, residues 555-758 (RLKMFLTPHM…NSVYRVLKVN (204 aa)) are nuclear.

The protein belongs to the dpy-19 family. In terms of assembly, interacts with FAM209. As to expression, widely expressed with high expression in testis. Not detectable in ejaculated sperm (at protein level).

It localises to the nucleus inner membrane. Its function is as follows. Probable C-mannosyltransferase that mediates C-mannosylation of tryptophan residues on target proteins. In terms of biological role, required during spermatogenesis for sperm head elongation and acrosome formation. Also plays a role in acrosome attachment to the nuclear envelope. This Homo sapiens (Human) protein is Probable C-mannosyltransferase DPY19L2.